Here is a 437-residue protein sequence, read N- to C-terminus: Coiled-coil domain-containing protein 78 (437 aa).

Coiled-coil stretches lie at residues 83-114 (HLREQHEAEVFELRREILRLESRVLELELHGN), 147-287 (EELK…QRQE), and 360-408 (QRLQ…YKQE).

This sequence belongs to the CCDC78 family.

Its subcellular location is the cytoplasm. It localises to the cytoskeleton. The protein resides in the microtubule organizing center. The protein localises to the centrosome. It is found in the centriole. Its subcellular location is the perinuclear region. It localises to the cell membrane. The protein resides in the sarcolemma. The protein localises to the sarcoplasmic reticulum. Functionally, component of the deuterosome, a structure that promotes de novo centriole amplification in multiciliated cells that can generate more than 100 centrioles. Deuterosome-mediated centriole amplification occurs in terminally differentiated multiciliated cells (G1/0) and not in S phase. Essential for centriole amplification and is required for CEP152 localization to the deuterosome. In Mus musculus (Mouse), this protein is Coiled-coil domain-containing protein 78 (Ccdc78).